The primary structure comprises 65 residues: uncharacterized protein (65 aa).

This is an uncharacterized protein from Vaccinia virus (strain Copenhagen) (VACV).